We begin with the raw amino-acid sequence, 197 residues long: Phosphoheptose isomerase (197 aa).

The SIS domain occupies 40 to 197 (CIASIAQGGK…LVEHSIFGKQ (158 aa)). 55 to 57 (NGG) contacts substrate. The Zn(2+) site is built by H64 and E68. Substrate contacts are provided by residues E68, 97–98 (ND), 123–125 (STS), S128, and Q175. Zn(2+) is bound by residues Q175 and H183.

This sequence belongs to the SIS family. GmhA subfamily. Homotetramer. Zn(2+) serves as cofactor.

Its subcellular location is the cytoplasm. It catalyses the reaction 2 D-sedoheptulose 7-phosphate = D-glycero-alpha-D-manno-heptose 7-phosphate + D-glycero-beta-D-manno-heptose 7-phosphate. It functions in the pathway carbohydrate biosynthesis; D-glycero-D-manno-heptose 7-phosphate biosynthesis; D-glycero-alpha-D-manno-heptose 7-phosphate and D-glycero-beta-D-manno-heptose 7-phosphate from sedoheptulose 7-phosphate: step 1/1. Its pathway is capsule biogenesis; capsule polysaccharide biosynthesis. Catalyzes the isomerization of sedoheptulose 7-phosphate in D-glycero-D-manno-heptose 7-phosphate. The sequence is that of Phosphoheptose isomerase (gmhA) from Burkholderia pseudomallei (strain K96243).